The following is a 253-amino-acid chain: 5-oxoprolinase subunit A (253 aa).

This sequence belongs to the LamB/PxpA family. Forms a complex composed of PxpA, PxpB and PxpC.

The catalysed reaction is 5-oxo-L-proline + ATP + 2 H2O = L-glutamate + ADP + phosphate + H(+). In terms of biological role, catalyzes the cleavage of 5-oxoproline to form L-glutamate coupled to the hydrolysis of ATP to ADP and inorganic phosphate. The protein is 5-oxoprolinase subunit A of Bacillus anthracis (strain A0248).